The chain runs to 298 residues: 4-hydroxy-tetrahydrodipicolinate synthase (298 aa).

Threonine 48 is a pyruvate binding site. The active-site Proton donor/acceptor is tyrosine 137. Lysine 166 functions as the Schiff-base intermediate with substrate in the catalytic mechanism. Isoleucine 207 contacts pyruvate.

It belongs to the DapA family. Homotetramer; dimer of dimers.

It localises to the cytoplasm. The catalysed reaction is L-aspartate 4-semialdehyde + pyruvate = (2S,4S)-4-hydroxy-2,3,4,5-tetrahydrodipicolinate + H2O + H(+). It functions in the pathway amino-acid biosynthesis; L-lysine biosynthesis via DAP pathway; (S)-tetrahydrodipicolinate from L-aspartate: step 3/4. In terms of biological role, catalyzes the condensation of (S)-aspartate-beta-semialdehyde [(S)-ASA] and pyruvate to 4-hydroxy-tetrahydrodipicolinate (HTPA). The chain is 4-hydroxy-tetrahydrodipicolinate synthase from Campylobacter jejuni subsp. jejuni serotype O:23/36 (strain 81-176).